A 489-amino-acid chain; its full sequence is Fumarate reductase (CoM/CoB) subunit B (489 aa).

A 2Fe-2S ferredoxin-type domain is found at isoleucine 2–proline 89. [2Fe-2S] cluster is bound by residues cysteine 53, cysteine 58, cysteine 61, and cysteine 73. 2 4Fe-4S ferredoxin-type domains span residues proline 124 to proline 158 and alanine 178 to alanine 209. [4Fe-4S] cluster is bound by residues cysteine 136, cysteine 139, cysteine 142, cysteine 146, cysteine 189, cysteine 192, cysteine 195, and cysteine 199.

As to quaternary structure, subunit B of the heterodimeric fumarate reductase of methanogenic Archaea, composed of subunits A (TfrA) and B (TfrB). Requires [2Fe-2S] cluster as cofactor. It depends on [4Fe-4S] cluster as a cofactor.

It localises to the cytoplasm. It catalyses the reaction coenzyme B + coenzyme M + fumarate = coenzyme M-coenzyme B heterodisulfide + succinate. Functionally, catalyzes the reduction of fumarate with reduced coenzyme M (CoM-S-H) and coenzyme B (CoB-S-H). In vitro, is able to reduces fumarate with reduced benzyl viologen, oxidize CoM-S-H and CoB-S-H to CoM-S-S-CoB with methylene blue, and reduce CoM-S-S-CoB with reduced benzyl viologen. The enzyme has specificity for the two thiol compounds as the CoB--CoM heterodisulfide reductase. The enzyme is very sensitive to oxygen. The sequence is that of Fumarate reductase (CoM/CoB) subunit B from Methanothermobacter marburgensis (strain ATCC BAA-927 / DSM 2133 / JCM 14651 / NBRC 100331 / OCM 82 / Marburg) (Methanobacterium thermoautotrophicum).